The following is a 243-amino-acid chain: DNA repair protein RecO (243 aa).

Belongs to the RecO family.

Its function is as follows. Involved in DNA repair and RecF pathway recombination. In Hyphomonas neptunium (strain ATCC 15444), this protein is DNA repair protein RecO.